A 396-amino-acid chain; its full sequence is Elongation factor Tu 2 (396 aa).

Positions 10-206 (KPHCNIGTIG…AVDAYIPQPE (197 aa)) constitute a tr-type G domain. The G1 stretch occupies residues 19 to 26 (GHVDHGKT). 19–26 (GHVDHGKT) lines the GTP pocket. Mg(2+) is bound at residue Thr-26. Residues 60–64 (GITIS) are G2. A G3 region spans residues 81–84 (DCPG). GTP contacts are provided by residues 81 to 85 (DCPGH) and 136 to 139 (NKCD). Residues 136–139 (NKCD) are G4. Positions 174 to 176 (SAL) are G5.

Belongs to the TRAFAC class translation factor GTPase superfamily. Classic translation factor GTPase family. EF-Tu/EF-1A subfamily. Monomer.

Its subcellular location is the cytoplasm. The catalysed reaction is GTP + H2O = GDP + phosphate + H(+). In terms of biological role, GTP hydrolase that promotes the GTP-dependent binding of aminoacyl-tRNA to the A-site of ribosomes during protein biosynthesis. The polypeptide is Elongation factor Tu 2 (Rhodopseudomonas palustris (strain BisB5)).